The sequence spans 260 residues: MSPAEASREENVYMAKLAEQAERYEEMVEFMEKVAKTTDVGELTVEERNLLSVAYKNVIGARRASWRIISSIEQKEESRGNEAYVASIKEYRSRIETELSKICDGILKLLDSHLVPSATAAESKVFYLKMKGDYHRYLAEFKSGAERKEAAENTLVAYKSAQDIALADLPTTHPIRLGLALNFSVFYYEILNSPDRACNLAKQAFDDAIAELDTLGEESYKDSTLIMQLLRDNLTLWTSDNAEDGGDEIKEAAKPEGEGH.

The segment at 241–260 (NAEDGGDEIKEAAKPEGEGH) is disordered. Residues 247–260 (DEIKEAAKPEGEGH) are compositionally biased toward basic and acidic residues.

Belongs to the 14-3-3 family. May form a complex with the transcriptional activator VP1 and the bZIP transcription factor EMBP1. As to expression, expressed in seedlings, roots and panicles and at lower levels in flag leaves and internodes.

The protein localises to the cytoplasm. It localises to the nucleus. Functionally, is associated with a DNA binding complex that binds to the G box, a well-characterized cis-acting DNA regulatory element found in plant genes. In Oryza sativa subsp. japonica (Rice), this protein is 14-3-3-like protein GF14-F (GF14F).